Here is a 342-residue protein sequence, read N- to C-terminus: C-X-C chemokine receptor type 6 (342 aa).

Over 1-32 (MAEHDYHEDYGFSSFNDSSQEEHQDFLQFSKV) the chain is Extracellular. A glycan (N-linked (GlcNAc...) asparagine) is linked at Asn-16. A helical transmembrane segment spans residues 33 to 59 (FLPCMYLVVFVCGLVGNSLVLVISIFY). Residues 60–68 (HKLQSLTDV) lie on the Cytoplasmic side of the membrane. Residues 69–89 (FLVNLPLADLVFVCTLPFWAY) traverse the membrane as a helical segment. Topologically, residues 90–103 (AGIHEWVFGQVMCK) are extracellular. A disulfide bridge connects residues Cys-102 and Cys-180. A helical transmembrane segment spans residues 104 to 125 (SLLGIYTINFYTSMLILTCITV). Over 126 to 143 (DRFIVVVKATKAYNQQAK) the chain is Cytoplasmic. A helical membrane pass occupies residues 144–164 (RMTWGKVTSLLIWVISLLVSL). The Extracellular portion of the chain corresponds to 165–187 (PQIIYGNVFNLDKLICGYHDEAI). Residues 188-215 (STVVLATQMTLGFFLPLLTMIVCYSVII) form a helical membrane-spanning segment. The Cytoplasmic segment spans residues 216-231 (KTLLHAGGFQKHRSLK). A helical transmembrane segment spans residues 232 to 259 (IIFLVMAVFLLTQMPFNLMKFIRSTHWE). The Extracellular segment spans residues 260–275 (YYAMTSFHYTIMVTEA). Residues 276–293 (IAYLRACLNPVLYAFVSL) form a helical membrane-spanning segment. At 294-342 (KFRKNFWKLVKDIGCLPYLGVSHQWKSSEDNSKTFSASHNVEATSMFQL) the chain is on the cytoplasmic side.

It belongs to the G-protein coupled receptor 1 family. As to expression, expressed in lymphoid tissues and activated T cells.

The protein localises to the cell membrane. Its function is as follows. Receptor for the C-X-C chemokine CXCL16. Used as a coreceptor by SIVs and by strains of HIV-2 and m-tropic HIV-1. This chain is C-X-C chemokine receptor type 6 (CXCR6), found in Homo sapiens (Human).